A 486-amino-acid polypeptide reads, in one-letter code: Cytosol aminopeptidase (486 aa).

Positions 249 and 254 each coordinate Zn(2+). The active site involves K261. D272, D331, and E333 together coordinate Zn(2+). The active site involves R335.

It belongs to the peptidase M17 family. As to quaternary structure, homohexamer. Zn(2+) serves as cofactor.

The protein resides in the cytoplasm. The catalysed reaction is Release of an N-terminal amino acid, Xaa-|-Yaa-, in which Xaa is preferably Leu, but may be other amino acids including Pro although not Arg or Lys, and Yaa may be Pro. Amino acid amides and methyl esters are also readily hydrolyzed, but rates on arylamides are exceedingly low.. It catalyses the reaction Release of N-terminal proline from a peptide.. Functionally, presumably involved in the processing and regular turnover of intracellular proteins. Catalyzes the removal of unsubstituted N-terminal amino acids from various peptides. The chain is Cytosol aminopeptidase from Encephalitozoon cuniculi (strain GB-M1) (Microsporidian parasite).